The following is an 856-amino-acid chain: Beta-galactosidase 3 (856 aa).

The signal sequence occupies residues 1-31; the sequence is MREMGTGDSASRLILWFCLGFLILGVGFVQC. Glu-189 functions as the Proton donor in the catalytic mechanism. Catalysis depends on Glu-258, which acts as the Nucleophile. The N-linked (GlcNAc...) asparagine glycan is linked to Asn-468. The region spanning 760-846 is the SUEL-type lectin domain; the sequence is TFHRPKVHLK…KRLTVEAVCA (87 aa).

This sequence belongs to the glycosyl hydrolase 35 family. Ubiquitous.

It is found in the secreted. The protein resides in the extracellular space. Its subcellular location is the apoplast. The catalysed reaction is Hydrolysis of terminal non-reducing beta-D-galactose residues in beta-D-galactosides.. The sequence is that of Beta-galactosidase 3 (BGAL3) from Arabidopsis thaliana (Mouse-ear cress).